A 478-amino-acid chain; its full sequence is Maintenance of telomere capping protein 1 (478 aa).

The disordered stretch occupies residues 1–153; that stretch reads MSENKNSEAE…LHDPIASISN (153 aa). Basic and acidic residues-rich tracts occupy residues 77–87 and 95–124; these read TDKKGVEKKAP and AQDE…QQQE. Over residues 125 to 141 the composition is skewed to acidic residues; it reads KEEEEEEEEEEEEEEEE. S273 is subject to Phosphoserine. Basic and acidic residues-rich tracts occupy residues 321 to 336 and 421 to 435; these read QKQQ…DDRS and SEER…KQKE. 2 disordered regions span residues 321–341 and 416–448; these read QKQQ…ISSN and TGST…IIDP. S436 bears the Phosphoserine mark. The span at 436-447 shows a compositional bias: acidic residues; the sequence is SEDEDEDDEIID.

Belongs to the MTC1 family. In terms of assembly, interacts with ribosomes.

The protein resides in the cytoplasm. The protein localises to the cytoplasmic vesicle. It is found in the COPI-coated vesicle. Its function is as follows. Involved in telomere capping. The protein is Maintenance of telomere capping protein 1 (MTC1) of Saccharomyces cerevisiae (strain ATCC 204508 / S288c) (Baker's yeast).